The primary structure comprises 447 residues: Diaminopimelate decarboxylase (447 aa).

At Lys-72 the chain carries N6-(pyridoxal phosphate)lysine. Residues Gly-258 and Glu-300–Arg-303 contribute to the pyridoxal 5'-phosphate site. Residues Arg-303, Arg-344, and Tyr-348 each contribute to the substrate site. The active-site Proton donor is Cys-375. Residues Glu-376 and Tyr-405 each coordinate substrate. Tyr-405 lines the pyridoxal 5'-phosphate pocket.

The protein belongs to the Orn/Lys/Arg decarboxylase class-II family. LysA subfamily. Homodimer. Requires pyridoxal 5'-phosphate as cofactor.

It catalyses the reaction meso-2,6-diaminopimelate + H(+) = L-lysine + CO2. The protein operates within amino-acid biosynthesis; L-lysine biosynthesis via DAP pathway; L-lysine from DL-2,6-diaminopimelate: step 1/1. In terms of biological role, specifically catalyzes the decarboxylation of meso-diaminopimelate (meso-DAP) to L-lysine. The protein is Diaminopimelate decarboxylase of Mycobacterium bovis (strain ATCC BAA-935 / AF2122/97).